The primary structure comprises 448 residues: Ribosomal protein uS12 methylthiotransferase RimO (448 aa).

The 117-residue stretch at 7–123 (EKVSLVSLGC…IAEIIAEKEG (117 aa)) folds into the MTTase N-terminal domain. Residues Cys16, Cys52, Cys86, Cys161, Cys165, and Cys168 each contribute to the [4Fe-4S] cluster site. The 231-residue stretch at 147 to 377 (SSPYYTAYLK…MRTQARVSFK (231 aa)) folds into the Radical SAM core domain. In terms of domain architecture, TRAM spans 380–448 (RSLVDTEELV…DYDLIGEIVP (69 aa)).

The protein belongs to the methylthiotransferase family. RimO subfamily. It depends on [4Fe-4S] cluster as a cofactor.

The protein localises to the cytoplasm. The enzyme catalyses L-aspartate(89)-[ribosomal protein uS12]-hydrogen + (sulfur carrier)-SH + AH2 + 2 S-adenosyl-L-methionine = 3-methylsulfanyl-L-aspartate(89)-[ribosomal protein uS12]-hydrogen + (sulfur carrier)-H + 5'-deoxyadenosine + L-methionine + A + S-adenosyl-L-homocysteine + 2 H(+). Its function is as follows. Catalyzes the methylthiolation of an aspartic acid residue of ribosomal protein uS12. This chain is Ribosomal protein uS12 methylthiotransferase RimO, found in Geotalea uraniireducens (strain Rf4) (Geobacter uraniireducens).